The following is a 72-amino-acid chain: RTCNKTPSDQSKICPPGENICYTKTWCDAWCSQRGKIVELGCAATCPKVKAGVEIKCCSTDNCNKFKFGKPR.

5 disulfides stabilise this stretch: C3–C21, C14–C42, C27–C31, C46–C57, and C58–C63.

This sequence belongs to the three-finger toxin family. Long-chain subfamily. Type II alpha-neurotoxin sub-subfamily. As to expression, expressed by the venom gland.

The protein resides in the secreted. Its function is as follows. Binds with high affinity to muscular (alpha-1/CHRNA1) and neuronal (alpha-7/CHRNA7) nicotinic acetylcholine receptor (nAChR) and inhibits acetylcholine from binding to the receptor, thereby impairing neuromuscular and neuronal transmission. This chain is Alpha-elapitoxin-Dpp2c, found in Dendroaspis polylepis polylepis (Black mamba).